The following is a 343-amino-acid chain: MDASLSPDQLSFPAVWRHPHLLDLERLTAAEILAVLRTADQLKTMTEGCRRKVPLLTGKTCANLFFENSTRTRNSFSLAAKRLGADTVEFSSSGSSVAKGETFVDTAKTIEAMGVDWVVTRHSTPGTPHLLARELDCCVLNAGDGPHEHPTQGLLDMLTILQHRIGSDWKNEAADPEKVFAGMTVALVGDIAHSRTARSNLWGLRKLGAHVIICGPPTLVSHRWEELGFEVAHRLDEIVHRCDVLNLLRIQFERQKARPFPSVYEYAALYAMNGERLRLAKDDILIMAPGPINRGVEITPEVADGPHSVILEQVTNGIAVRMASLWLLANAKENADASAENLS.

Carbamoyl phosphate is bound by residues arginine 71 and threonine 72. Lysine 99 contributes to the L-aspartate binding site. The carbamoyl phosphate site is built by arginine 121, histidine 149, and glutamine 152. L-aspartate is bound by residues arginine 195 and arginine 249. Residues glycine 290 and proline 291 each contribute to the carbamoyl phosphate site.

Belongs to the aspartate/ornithine carbamoyltransferase superfamily. ATCase family. As to quaternary structure, heterododecamer (2C3:3R2) of six catalytic PyrB chains organized as two trimers (C3), and six regulatory PyrI chains organized as three dimers (R2).

It carries out the reaction carbamoyl phosphate + L-aspartate = N-carbamoyl-L-aspartate + phosphate + H(+). The protein operates within pyrimidine metabolism; UMP biosynthesis via de novo pathway; (S)-dihydroorotate from bicarbonate: step 2/3. Functionally, catalyzes the condensation of carbamoyl phosphate and aspartate to form carbamoyl aspartate and inorganic phosphate, the committed step in the de novo pyrimidine nucleotide biosynthesis pathway. This is Aspartate carbamoyltransferase catalytic subunit from Rhodopirellula baltica (strain DSM 10527 / NCIMB 13988 / SH1).